The sequence spans 133 residues: Nickel-responsive regulator (133 aa).

4 residues coordinate Ni(2+): His76, His87, His89, and Cys95.

Belongs to the transcriptional regulatory CopG/NikR family. As to quaternary structure, homotetramer. Ni(2+) serves as cofactor.

Transcriptional repressor of the nikABCDE operon. Is active in the presence of excessive concentrations of intracellular nickel. This Salmonella arizonae (strain ATCC BAA-731 / CDC346-86 / RSK2980) protein is Nickel-responsive regulator.